We begin with the raw amino-acid sequence, 350 residues long: Vetispiradiene synthase 3 (350 aa).

Positions 103, 107, 246, 250, and 254 each coordinate Mg(2+). The DDXXD motif motif lies at 103 to 107; that stretch reads DDTFD.

The protein belongs to the terpene synthase family. Tpsa subfamily. Requires Mg(2+) as cofactor.

It localises to the cytoplasm. It carries out the reaction (2E,6E)-farnesyl diphosphate = (-)-vetispiradiene + diphosphate. It functions in the pathway secondary metabolite biosynthesis; terpenoid biosynthesis. Functionally, sesquiterpene synthase that catalyzes the formation of vetispiradiene from trans,trans-farnesyl diphosphate. The initial internal cyclization produces the monocyclic intermediate germacrene A. This is Vetispiradiene synthase 3 from Hyoscyamus muticus (Egyptian henbane).